A 254-amino-acid polypeptide reads, in one-letter code: Ribosomal RNA small subunit methyltransferase J (254 aa).

Residues 107-108, 123-124, and D174 each bind S-adenosyl-L-methionine; these read RD and ER.

It belongs to the methyltransferase superfamily. RsmJ family.

Its subcellular location is the cytoplasm. It carries out the reaction guanosine(1516) in 16S rRNA + S-adenosyl-L-methionine = N(2)-methylguanosine(1516) in 16S rRNA + S-adenosyl-L-homocysteine + H(+). Functionally, specifically methylates the guanosine in position 1516 of 16S rRNA. In Coxiella burnetii (strain CbuK_Q154) (Coxiella burnetii (strain Q154)), this protein is Ribosomal RNA small subunit methyltransferase J.